A 264-amino-acid polypeptide reads, in one-letter code: Thymidylate synthase (264 aa).

Position 21 (arginine 21) interacts with dUMP. Histidine 51 provides a ligand contact to (6R)-5,10-methylene-5,6,7,8-tetrahydrofolate. 126–127 provides a ligand contact to dUMP; that stretch reads RR. Catalysis depends on cysteine 146, which acts as the Nucleophile. DUMP contacts are provided by residues 166–169, asparagine 177, and 207–209; these read RSAD and HIY. Aspartate 169 is a (6R)-5,10-methylene-5,6,7,8-tetrahydrofolate binding site. Serine 263 is a binding site for (6R)-5,10-methylene-5,6,7,8-tetrahydrofolate.

This sequence belongs to the thymidylate synthase family. Bacterial-type ThyA subfamily. As to quaternary structure, homodimer.

The protein resides in the cytoplasm. The catalysed reaction is dUMP + (6R)-5,10-methylene-5,6,7,8-tetrahydrofolate = 7,8-dihydrofolate + dTMP. The protein operates within pyrimidine metabolism; dTTP biosynthesis. Catalyzes the reductive methylation of 2'-deoxyuridine-5'-monophosphate (dUMP) to 2'-deoxythymidine-5'-monophosphate (dTMP) while utilizing 5,10-methylenetetrahydrofolate (mTHF) as the methyl donor and reductant in the reaction, yielding dihydrofolate (DHF) as a by-product. This enzymatic reaction provides an intracellular de novo source of dTMP, an essential precursor for DNA biosynthesis. This Exiguobacterium sp. (strain ATCC BAA-1283 / AT1b) protein is Thymidylate synthase.